The following is a 323-amino-acid chain: Arginase, hepatic (323 aa).

The Mn(2+) site is built by H102, D125, H127, and D129. Substrate contacts are provided by residues 127-131, 138-140, and D184; these read HADIN and SGN. Residues D233 and D235 each contribute to the Mn(2+) site. Residues T247 and E278 each contribute to the substrate site.

It belongs to the arginase family. As to quaternary structure, homotrimer. It depends on Mn(2+) as a cofactor.

The catalysed reaction is L-arginine + H2O = urea + L-ornithine. The protein operates within nitrogen metabolism; urea cycle; L-ornithine and urea from L-arginine: step 1/1. In Aquarana catesbeiana (American bullfrog), this protein is Arginase, hepatic.